A 305-amino-acid chain; its full sequence is Ribosomal protein L11 methyltransferase (305 aa).

Residues Thr155, Gly176, Asp198, and Asn241 each contribute to the S-adenosyl-L-methionine site.

Belongs to the methyltransferase superfamily. PrmA family.

Its subcellular location is the cytoplasm. It catalyses the reaction L-lysyl-[protein] + 3 S-adenosyl-L-methionine = N(6),N(6),N(6)-trimethyl-L-lysyl-[protein] + 3 S-adenosyl-L-homocysteine + 3 H(+). In terms of biological role, methylates ribosomal protein L11. The protein is Ribosomal protein L11 methyltransferase of Carboxydothermus hydrogenoformans (strain ATCC BAA-161 / DSM 6008 / Z-2901).